The following is a 434-amino-acid chain: Gamma-enolase (434 aa).

Position 2 is an N-acetylserine (S2). Residue K5 is modified to N6-acetyllysine. A Phosphothreonine modification is found at T26. S40 lines the Mg(2+) pocket. Y44 carries the phosphotyrosine modification. The residue at position 60 (K60) is an N6-acetyllysine; alternate. N6-succinyllysine; alternate is present on K60. K64 bears the N6-acetyllysine mark. An N6-acetyllysine; alternate modification is found at K89. K89 is subject to N6-succinyllysine; alternate. Substrate contacts are provided by H158 and E167. N6-acetyllysine occurs at positions 193, 197, and 199. Residue K202 is modified to N6-acetyllysine; alternate. K202 is covalently cross-linked (Glycyl lysine isopeptide (Lys-Gly) (interchain with G-Cter in SUMO2); alternate). The Proton donor role is filled by E210. 2 positions are modified to N6-acetyllysine; alternate: K228 and K233. K228 carries the N6-succinyllysine; alternate modification. K233 carries the N6-(2-hydroxyisobutyryl)lysine; alternate modification. Residue D245 participates in Mg(2+) binding. K256 carries the N6-acetyllysine modification. The residue at position 263 (S263) is a Phosphoserine. Phosphotyrosine is present on Y287. The residue at position 291 (S291) is a Phosphoserine. Residues E293 and D318 each coordinate Mg(2+). Substrate is bound by residues E293 and D318. Residues K335 and K343 each carry the N6-acetyllysine modification. The active-site Proton acceptor is K343. Substrate contacts are provided by residues 370 to 373 (SHRS) and K394. Residue K406 is modified to N6-acetyllysine.

Belongs to the enolase family. As to quaternary structure, mammalian enolase is composed of 3 isozyme subunits, alpha, beta and gamma, which can form homodimers or heterodimers which are cell-type and development-specific. Mg(2+) serves as cofactor. As to expression, skeletal muscle (at protein level). The alpha/alpha homodimer is expressed in embryo and in most adult tissues. The alpha/beta heterodimer and the beta/beta homodimer are found in striated muscle, and the alpha/gamma heterodimer and the gamma/gamma homodimer in neurons.

It is found in the cytoplasm. It localises to the cell membrane. The catalysed reaction is (2R)-2-phosphoglycerate = phosphoenolpyruvate + H2O. Its pathway is carbohydrate degradation; glycolysis; pyruvate from D-glyceraldehyde 3-phosphate: step 4/5. Functionally, has neurotrophic and neuroprotective properties on a broad spectrum of central nervous system (CNS) neurons. Binds, in a calcium-dependent manner, to cultured neocortical neurons and promotes cell survival. The sequence is that of Gamma-enolase (Eno2) from Mus musculus (Mouse).